A 567-amino-acid chain; its full sequence is Geranylgeranyl transferase type-2 subunit alpha (567 aa).

6 PFTA repeats span residues 44–78 (LDES…HLET), 88–122 (LVKA…RLPE), 124–158 (NWAR…QAAV), 159–193 (APAE…QLHP), 207–241 (VLLK…RAEP), and 363–397 (VLQS…ALDP). Residue Ser98 is modified to Phosphoserine. LRR repeat units lie at residues 442-463 (DVRV…EQLL), 464-486 (LVTH…AALR), 487-508 (CLEV…ANLP), 509-530 (RLQE…QPLV), and 534-555 (RLVL…QERL).

Belongs to the protein prenyltransferase subunit alpha family. As to quaternary structure, heterotrimer composed of RABGGTA, RABGGTB and CHM; within this trimer, RABGGTA and RABGGTB form the catalytic component B, while CHM (component A) mediates peptide substrate binding. The Rab GGTase dimer (RGGT) interacts with CHM (component A) prior to Rab protein binding; the association is stabilized by geranylgeranyl pyrophosphate (GGpp). The CHM:RGGT:Rab complex is destabilized by GGpp. Interacts with non-phosphorylated form of RAB8A; phosphorylation of RAB8A at 'Thr-72' disrupts this interaction. Most abundant in the heart, brain, spleen and liver. Less in the lung, muscle, kidney and testis; in these tissues less abundant than the beta subunit.

It carries out the reaction geranylgeranyl diphosphate + L-cysteinyl-[protein] = S-geranylgeranyl-L-cysteinyl-[protein] + diphosphate. Its activity is regulated as follows. The enzymatic reaction requires the aid of a Rab escort protein (also called component A), such as CHM. Functionally, catalyzes the transfer of a geranylgeranyl moiety from geranylgeranyl diphosphate to both cysteines of Rab proteins with the C-terminal sequence -XXCC, -XCXC and -CCXX, such as RAB1A, RAB3A, RAB5A and RAB7A. This Rattus norvegicus (Rat) protein is Geranylgeranyl transferase type-2 subunit alpha (Rabggta).